A 407-amino-acid chain; its full sequence is Putative serine/threonine-protein kinase C01C4.3 (407 aa).

Polar residues predominate over residues 33–57 (NQLQNHPPRNATQSPQRQPRTSESS). The segment at 33-68 (NQLQNHPPRNATQSPQRQPRTSESSMDFPRSALRRN) is disordered. A Protein kinase domain is found at 126-397 (YTVNKQLGTG…RKCLAKEKLL (272 aa)). Residues 132 to 140 (LGTGRFGFI) and Lys-155 contribute to the ATP site. Catalysis depends on Asn-251, which acts as the Proton acceptor.

It belongs to the protein kinase superfamily. Ser/Thr protein kinase family.

The catalysed reaction is L-seryl-[protein] + ATP = O-phospho-L-seryl-[protein] + ADP + H(+). It catalyses the reaction L-threonyl-[protein] + ATP = O-phospho-L-threonyl-[protein] + ADP + H(+). The protein is Putative serine/threonine-protein kinase C01C4.3 of Caenorhabditis elegans.